A 695-amino-acid polypeptide reads, in one-letter code: Nicastrin (695 aa).

A signal peptide spans methionine 1–alanine 22. The Extracellular segment spans residues glutamine 23–glutamine 654. 9 N-linked (GlcNAc...) asparagine glycosylation sites follow: asparagine 45, asparagine 108, asparagine 116, asparagine 138, asparagine 381, asparagine 461, asparagine 489, asparagine 585, and asparagine 609. Residues valine 655–isoleucine 675 traverse the membrane as a helical segment. Residues serine 676 to glycine 695 lie on the Cytoplasmic side of the membrane.

This sequence belongs to the nicastrin family. As to quaternary structure, component of the gamma-secretase complex, a complex composed of a presenilin (Psn) homodimer, nicastrin (Nct), Aph-1 and Pen-2.

Its subcellular location is the membrane. In terms of biological role, essential subunit of the gamma-secretase complex, an endoprotease complex that catalyzes the intramembrane cleavage of integral membrane proteins such as Notch. It probably represents a stabilizing cofactor required for the assembly of the gamma-secretase complex. In Drosophila melanogaster (Fruit fly), this protein is Nicastrin.